The primary structure comprises 170 residues: Putative 3-methyladenine DNA glycosylase (170 aa).

Belongs to the DNA glycosylase MPG family.

This chain is Putative 3-methyladenine DNA glycosylase, found in Sodalis glossinidius.